A 378-amino-acid polypeptide reads, in one-letter code: Putative glutamate--cysteine ligase 2 (378 aa).

This sequence belongs to the glutamate--cysteine ligase type 2 family. YbdK subfamily.

It catalyses the reaction L-cysteine + L-glutamate + ATP = gamma-L-glutamyl-L-cysteine + ADP + phosphate + H(+). Functionally, ATP-dependent carboxylate-amine ligase which exhibits weak glutamate--cysteine ligase activity. This is Putative glutamate--cysteine ligase 2 from Pseudomonas paraeruginosa (strain DSM 24068 / PA7) (Pseudomonas aeruginosa (strain PA7)).